Reading from the N-terminus, the 349-residue chain is Anthranilate phosphoribosyltransferase (349 aa).

5-phospho-alpha-D-ribose 1-diphosphate is bound by residues glycine 87, 90 to 91 (GD), threonine 95, 97 to 100 (NIST), 115 to 123 (KHGNRSVSS), and serine 127. Residue glycine 87 participates in anthranilate binding. Serine 99 is a Mg(2+) binding site. Asparagine 118 provides a ligand contact to anthranilate. Position 173 (arginine 173) interacts with anthranilate. Positions 231 and 232 each coordinate Mg(2+).

The protein belongs to the anthranilate phosphoribosyltransferase family. Homodimer. The cofactor is Mg(2+).

The enzyme catalyses N-(5-phospho-beta-D-ribosyl)anthranilate + diphosphate = 5-phospho-alpha-D-ribose 1-diphosphate + anthranilate. It participates in amino-acid biosynthesis; L-tryptophan biosynthesis; L-tryptophan from chorismate: step 2/5. Catalyzes the transfer of the phosphoribosyl group of 5-phosphorylribose-1-pyrophosphate (PRPP) to anthranilate to yield N-(5'-phosphoribosyl)-anthranilate (PRA). The chain is Anthranilate phosphoribosyltransferase from Shewanella loihica (strain ATCC BAA-1088 / PV-4).